The following is a 429-amino-acid chain: MLIGYILGDGTLKIKVLKGFKDILPGEVELWQQVEKITRDIFTRHNFSEIRMPILEQTDLFARSIGEATDIVEKEMYTFVDKKVTMRPEATASLIRAYIENGLYVAKPVQRLFTIGPMFRHERPQKGRLRQFHQMDIEVLGSVNPLVDAELMAMGSMVFRTLGINVRLEMNSLGCPECRPVYRQALVEFIEDRFEHLCDDCKRRSKTNPLRVLDCKNAGCRAQVEEAPSILDYLCGDCADHFDTVCTTLESLEIPYSLNKFMVRGLDYYCRTTFEFITDDLGAQSAVGAGGRYDGLVEKLGGPVGMPGIGFAIGMERLILLLQQKETEFVAEKLDLFVIGLGDAATKLACILSQDLRGLGVGVAVDYEGRSLKAQMKLANKAGVAATLILGENEIETGKAVLKNMDSQEQCEVALVAGDIFAALAMSAQ.

It belongs to the class-II aminoacyl-tRNA synthetase family. As to quaternary structure, homodimer.

It is found in the cytoplasm. It carries out the reaction tRNA(His) + L-histidine + ATP = L-histidyl-tRNA(His) + AMP + diphosphate + H(+). This is Histidine--tRNA ligase from Desulfotalea psychrophila (strain LSv54 / DSM 12343).